Reading from the N-terminus, the 855-residue chain is Photoactivated adenylate cyclase subunit beta-like protein 1224-5/9F (855 aa).

The region spanning 56 to 149 (LRRLMYLSKG…GRMSGVWHMK (94 aa)) is the BLUF 1 domain. A disordered region spans residues 420-444 (RPPIFDDTPKCNPRPRTPGCEGRQR). The BLUF 2 domain occupies 471-563 (VPTLTYISHA…RVYPSEWTLT (93 aa)). The segment covering 813–827 (RSGEKPLTEPEEAKL) has biased composition (basic and acidic residues). Positions 813–855 (RSGEKPLTEPEEAKLDFSPGRVRHGDSGRRSNSAQGKLSIQVR) are disordered. The segment covering 842–855 (RSNSAQGKLSIQVR) has biased composition (polar residues).

Heterotetramer of two alpha and two beta subunits.

It localises to the cell projection. The protein localises to the cilium. It is found in the flagellum. The polypeptide is Photoactivated adenylate cyclase subunit beta-like protein 1224-5/9F (Euglena gracilis).